The sequence spans 270 residues: Putative F-box protein At3g24700 (270 aa).

The 45-residue stretch at 1–45 (MLTDLPLDLESEILSRVPATSLQRLKTTCKRWYALFRDPRFVKKN) folds into the F-box domain.

In Arabidopsis thaliana (Mouse-ear cress), this protein is Putative F-box protein At3g24700.